The primary structure comprises 517 residues: Enantioselective amidase (517 aa).

Residues lysine 96 and serine 173 each act as charge relay system in the active site. Serine 197 functions as the Acyl-ester intermediate in the catalytic mechanism.

Belongs to the amidase family. As to quaternary structure, homooctamer.

The catalysed reaction is a monocarboxylic acid amide + H2O = a monocarboxylate + NH4(+). This is Enantioselective amidase (amdA) from Rhodococcus rhodochrous.